We begin with the raw amino-acid sequence, 463 residues long: Serine/threonine-protein kinase sgk-1 (463 aa).

Positions 135-392 (FDYLTTIGKG…FRDIRDHPFF (258 aa)) constitute a Protein kinase domain. Residues 141-149 (IGKGSFGRV) and Lys-164 contribute to the ATP site. The active-site Proton acceptor is Asp-259. The region spanning 393-463 (LPVDWDKLLN…TFVDTNRVLV (71 aa)) is the AGC-kinase C-terminal domain.

The protein belongs to the protein kinase superfamily. AGC Ser/Thr protein kinase family. Interacts with pdk-1, akt-1, akt-2 and daf-16. Part of a complex containing sgk-1, akt-1 and akt-2. Interacts with let-92 phosphatase regulatory subunit pptr-1. Mg(2+) is required as a cofactor. In terms of tissue distribution, expressed in late embryos just before hatching. At postembryonic stages, expressed in sensory and motor neurons and in the intestine. Highly expressed in the intestine and head and tail neurons.

It localises to the cytoplasm. Its subcellular location is the nucleus. The protein localises to the apical cell membrane. It catalyses the reaction L-seryl-[protein] + ATP = O-phospho-L-seryl-[protein] + ADP + H(+). It carries out the reaction L-threonyl-[protein] + ATP = O-phospho-L-threonyl-[protein] + ADP + H(+). Phosphorylated and activated by pdk-1. Acts downstream of PI3 kinase age-1 and kinase pdk-1 in the daf-2/insulin receptor-like transduction pathway. Essential role in regulating development, stress response, and longevity. Phosphorylates Forkhead-related daf-16 and the longevity-promoting skn-1 transcription factors, which inhibits their entry into the nucleus and antagonizes their function. Promotes the cytoplasmic localization of the transcription factor pqm-1. Plays a role in the intracellular trafficking of proteins such as mig-14 to the cell membrane, and this may be through positively regulating ceramide synthesis. Acts downstream of rict-1 to regulate fat storage, size, development and vitellogenesis. Downstream of age-1 and together with akt-1/2, promotes cell survival during embryonic development. Plays a role in maintaining the gonadal basement membrane through antagonizing akt-1 activity. Does not appear to play a role in immune function. The sequence is that of Serine/threonine-protein kinase sgk-1 from Caenorhabditis elegans.